A 283-amino-acid chain; its full sequence is Nucleotide-binding protein Hore_15880 (283 aa).

An ATP-binding site is contributed by 8–15 (GMSGAGKS). GTP is bound at residue 57–60 (DIRG).

The protein belongs to the RapZ-like family.

Its function is as follows. Displays ATPase and GTPase activities. This chain is Nucleotide-binding protein Hore_15880, found in Halothermothrix orenii (strain H 168 / OCM 544 / DSM 9562).